A 398-amino-acid chain; its full sequence is Argininosuccinate synthase (398 aa).

9–17 provides a ligand contact to ATP; that stretch reads AYSGGLDTS. Residue Tyr85 participates in L-citrulline binding. Gly115 lines the ATP pocket. L-aspartate-binding residues include Thr117, Asn121, and Asp122. Asn121 is an L-citrulline binding site. L-citrulline contacts are provided by Arg125, Ser173, Glu258, and Tyr270.

Belongs to the argininosuccinate synthase family. Type 1 subfamily. As to quaternary structure, homotetramer.

The protein resides in the cytoplasm. The catalysed reaction is L-citrulline + L-aspartate + ATP = 2-(N(omega)-L-arginino)succinate + AMP + diphosphate + H(+). It participates in amino-acid biosynthesis; L-arginine biosynthesis; L-arginine from L-ornithine and carbamoyl phosphate: step 2/3. The protein is Argininosuccinate synthase of Streptococcus pneumoniae (strain ATCC BAA-255 / R6).